We begin with the raw amino-acid sequence, 278 residues long: MSVPTVLEKILARKAEEVAERRARVSLAELEAQAKVADAPRGFANALIAQAKLKQPAVIAEVKKASPSKGVIREIFIPEDIAKSYEKGGATCLSVLTDIDYFQGSDLFLQQARAACKLPVIRKDFMVDPYQIVEARALGADCVLLIVSALDDVKMAELAAVAKSVGLDVLVEVHDGDELERALKTLDTPLVGVNNRNLHTFEVSLENTLDLLPRIPRDRLVITESGIVNRADVELMEISGVYSFLVGETFMRAENPGAELQRLFFPERGVAVSGSTLD.

The protein belongs to the TrpC family.

It carries out the reaction 1-(2-carboxyphenylamino)-1-deoxy-D-ribulose 5-phosphate + H(+) = (1S,2R)-1-C-(indol-3-yl)glycerol 3-phosphate + CO2 + H2O. It functions in the pathway amino-acid biosynthesis; L-tryptophan biosynthesis; L-tryptophan from chorismate: step 4/5. The chain is Indole-3-glycerol phosphate synthase from Pseudomonas fluorescens (strain SBW25).